The primary structure comprises 541 residues: Glucose-6-phosphate isomerase (541 aa).

Catalysis depends on E346, which acts as the Proton donor. Residues H377 and K506 contribute to the active site.

It belongs to the GPI family.

It is found in the cytoplasm. It catalyses the reaction alpha-D-glucose 6-phosphate = beta-D-fructose 6-phosphate. It participates in carbohydrate biosynthesis; gluconeogenesis. It functions in the pathway carbohydrate degradation; glycolysis; D-glyceraldehyde 3-phosphate and glycerone phosphate from D-glucose: step 2/4. In terms of biological role, catalyzes the reversible isomerization of glucose-6-phosphate to fructose-6-phosphate. This is Glucose-6-phosphate isomerase from Rhizobium rhizogenes (strain K84 / ATCC BAA-868) (Agrobacterium radiobacter).